A 205-amino-acid polypeptide reads, in one-letter code: Probable GTP-binding protein EngB (205 aa).

The EngB-type G domain maps to 29–203; that stretch reads QGAEIAFIGR…KAVLSQWFRS (175 aa). GTP contacts are provided by residues 37–44, 64–68, 82–85, 149–152, and 182–184; these read GRSNAGKS, GRTQM, DLPG, TKSD, and FSS. The Mg(2+) site is built by serine 44 and threonine 66.

It belongs to the TRAFAC class TrmE-Era-EngA-EngB-Septin-like GTPase superfamily. EngB GTPase family. The cofactor is Mg(2+).

In terms of biological role, necessary for normal cell division and for the maintenance of normal septation. The chain is Probable GTP-binding protein EngB from Coxiella burnetii (strain RSA 493 / Nine Mile phase I).